The sequence spans 432 residues: Adenylosuccinate synthetase (432 aa).

GTP is bound by residues 12-18 (GDEGKGK) and 40-42 (GHT). The active-site Proton acceptor is the Asp13. Mg(2+) contacts are provided by Asp13 and Gly40. Residues 13-16 (DEGK), 38-41 (NAGH), Thr130, Arg144, Gln225, Thr240, and Arg304 contribute to the IMP site. The Proton donor role is filled by His41. Substrate is bound at residue 300-306 (ATTGRPR). Residues Arg306, 332-334 (KLD), and 414-416 (SVG) contribute to the GTP site.

Belongs to the adenylosuccinate synthetase family. As to quaternary structure, homodimer. It depends on Mg(2+) as a cofactor.

Its subcellular location is the cytoplasm. It catalyses the reaction IMP + L-aspartate + GTP = N(6)-(1,2-dicarboxyethyl)-AMP + GDP + phosphate + 2 H(+). It participates in purine metabolism; AMP biosynthesis via de novo pathway; AMP from IMP: step 1/2. Plays an important role in the de novo pathway of purine nucleotide biosynthesis. Catalyzes the first committed step in the biosynthesis of AMP from IMP. This is Adenylosuccinate synthetase from Anaeromyxobacter sp. (strain K).